Consider the following 179-residue polypeptide: ATP synthase subunit b (179 aa).

The helical transmembrane segment at 26 to 46 (FLEANLFNLAILLGIIIYYAP) threads the bilayer.

Belongs to the ATPase B chain family. In terms of assembly, F-type ATPases have 2 components, F(1) - the catalytic core - and F(0) - the membrane proton channel. F(1) has five subunits: alpha(3), beta(3), gamma(1), delta(1), epsilon(1). F(0) has four main subunits: a(1), b(1), b'(1) and c(10-14). The alpha and beta chains form an alternating ring which encloses part of the gamma chain. F(1) is attached to F(0) by a central stalk formed by the gamma and epsilon chains, while a peripheral stalk is formed by the delta, b and b' chains.

The protein resides in the cellular thylakoid membrane. Functionally, f(1)F(0) ATP synthase produces ATP from ADP in the presence of a proton or sodium gradient. F-type ATPases consist of two structural domains, F(1) containing the extramembraneous catalytic core and F(0) containing the membrane proton channel, linked together by a central stalk and a peripheral stalk. During catalysis, ATP synthesis in the catalytic domain of F(1) is coupled via a rotary mechanism of the central stalk subunits to proton translocation. Component of the F(0) channel, it forms part of the peripheral stalk, linking F(1) to F(0). The chain is ATP synthase subunit b from Synechocystis sp. (strain ATCC 27184 / PCC 6803 / Kazusa).